The primary structure comprises 145 residues: CBS domain-containing protein DDB_G0289609 (145 aa).

2 CBS domains span residues 9–66 (MSKS…FLPE) and 84–141 (MKQN…LEPV).

This chain is CBS domain-containing protein DDB_G0289609, found in Dictyostelium discoideum (Social amoeba).